Here is a 249-residue protein sequence, read N- to C-terminus: NADH dehydrogenase [ubiquinone] flavoprotein 2, mitochondrial (249 aa).

The transit peptide at 1 to 32 (MFFSAALRARAAGLTAHWGRHVRNLHKTAKQN) directs the protein to the mitochondrion. N6-acetyllysine is present on Lys-61. Residues Cys-135, Cys-140, Cys-176, and Cys-180 each coordinate [2Fe-2S] cluster. Tyr-193 is subject to Phosphotyrosine; by SRC. The tract at residues 213–249 (IPKPGPRSGRFSCEPAGGLTSLTEPPKGPGFGVQAGL) is disordered.

It belongs to the complex I 24 kDa subunit family. Core subunit of respiratory chain NADH dehydrogenase (Complex I) which is composed of 45 different subunits. This is a component of the flavoprotein-sulfur (FP) fragment of the enzyme. It depends on [2Fe-2S] cluster as a cofactor.

It localises to the mitochondrion inner membrane. The enzyme catalyses a ubiquinone + NADH + 5 H(+)(in) = a ubiquinol + NAD(+) + 4 H(+)(out). In terms of biological role, core subunit of the mitochondrial membrane respiratory chain NADH dehydrogenase (Complex I) which catalyzes electron transfer from NADH through the respiratory chain, using ubiquinone as an electron acceptor. Parts of the peripheral arm of the enzyme, where the electrons from NADH are accepted by flavin mononucleotide (FMN) and then passed along a chain of iron-sulfur clusters by electron tunnelling to the final acceptor ubiquinone. Contains one iron-sulfur cluster. The chain is NADH dehydrogenase [ubiquinone] flavoprotein 2, mitochondrial from Pan troglodytes (Chimpanzee).